Consider the following 211-residue polypeptide: tRNA (guanine-N(7)-)-methyltransferase (211 aa).

4 residues coordinate S-adenosyl-L-methionine: Glu43, Asp68, Asn95, and Asn117. A substrate-binding site is contributed by Lys121. An interaction with RNA region spans residues 123 to 128 (RHNKRR). Substrate contacts are provided by residues Asp153 and 190 to 193 (TEYE).

This sequence belongs to the class I-like SAM-binding methyltransferase superfamily. TrmB family.

It carries out the reaction guanosine(46) in tRNA + S-adenosyl-L-methionine = N(7)-methylguanosine(46) in tRNA + S-adenosyl-L-homocysteine. The protein operates within tRNA modification; N(7)-methylguanine-tRNA biosynthesis. In terms of biological role, catalyzes the formation of N(7)-methylguanine at position 46 (m7G46) in tRNA. The protein is tRNA (guanine-N(7)-)-methyltransferase of Clostridium tetani (strain Massachusetts / E88).